A 152-amino-acid polypeptide reads, in one-letter code: Endoribonuclease YbeY (152 aa).

Residues H118, H122, and H128 each contribute to the Zn(2+) site.

It belongs to the endoribonuclease YbeY family. It depends on Zn(2+) as a cofactor.

Its subcellular location is the cytoplasm. In terms of biological role, single strand-specific metallo-endoribonuclease involved in late-stage 70S ribosome quality control and in maturation of the 3' terminus of the 16S rRNA. The chain is Endoribonuclease YbeY from Pelotomaculum thermopropionicum (strain DSM 13744 / JCM 10971 / SI).